A 442-amino-acid chain; its full sequence is Transposase InsG for insertion sequence element IS4 (442 aa).

This sequence belongs to the transposase 11 family.

Functionally, involved in the transposition of the insertion sequence IS4. In Escherichia coli (strain K12), this protein is Transposase InsG for insertion sequence element IS4 (insG).